A 415-amino-acid chain; its full sequence is Glucose-1-phosphate adenylyltransferase (415 aa).

Alpha-D-glucose 1-phosphate is bound by residues Tyr-98, Gly-163, 178–179 (EK), and Ser-189.

It belongs to the bacterial/plant glucose-1-phosphate adenylyltransferase family. As to quaternary structure, homotetramer.

It carries out the reaction alpha-D-glucose 1-phosphate + ATP + H(+) = ADP-alpha-D-glucose + diphosphate. It participates in glycan biosynthesis; glycogen biosynthesis. Functionally, involved in the biosynthesis of ADP-glucose, a building block required for the elongation reactions to produce glycogen. Catalyzes the reaction between ATP and alpha-D-glucose 1-phosphate (G1P) to produce pyrophosphate and ADP-Glc. This chain is Glucose-1-phosphate adenylyltransferase, found in Fervidobacterium nodosum (strain ATCC 35602 / DSM 5306 / Rt17-B1).